The sequence spans 412 residues: MKIYLVGGAVRDALLGLPVKDRDWVVVGSTPQEMLDAGYHQVGRDFPVFLHPQTHEEYALARTERKSGSGYTGFTCYAAPDVTLEDDLKRRDLTINALAQDDNGEIIDPYNGLGDLQNRLLRHVSPAFGEDPLRVLRVARFAARYAHLVFRIADETLTLMREMTHAGELEHLTPERVWKETESALTTRNPQVFFQVLRDCGALRVLFPEIDALFGVPAPAKWHPEIDTGIHTLMTLSMAAMLSPQVDVRFATLCHDLGKGLTPPELWPRHHGHGPAGVKLVEQLCQRLRVPNEIRDLARLVAEFHDLIHTFPMLNPKTIVKLFDSIDAWRKPQRVEQLALTSEADVRGRTGFESADYPQGRWLREAWEVAQSVPTKAVVEAGFKGVEIREELTRRRIAAVASWKEQRCPKPE.

ATP is bound by residues glycine 8 and arginine 11. The CTP site is built by glycine 8 and arginine 11. Mg(2+) contacts are provided by aspartate 21 and aspartate 23. Residues arginine 91, arginine 137, and arginine 140 each coordinate ATP. CTP is bound by residues arginine 91, arginine 137, and arginine 140. The region spanning 228–329 (TGIHTLMTLS…VKLFDSIDAW (102 aa)) is the HD domain.

It belongs to the tRNA nucleotidyltransferase/poly(A) polymerase family. Bacterial CCA-adding enzyme type 1 subfamily. Monomer. Can also form homodimers and oligomers. The cofactor is Mg(2+). Ni(2+) serves as cofactor.

The enzyme catalyses a tRNA precursor + 2 CTP + ATP = a tRNA with a 3' CCA end + 3 diphosphate. It carries out the reaction a tRNA with a 3' CCA end + 2 CTP + ATP = a tRNA with a 3' CCACCA end + 3 diphosphate. Catalyzes the addition and repair of the essential 3'-terminal CCA sequence in tRNAs without using a nucleic acid template. Adds these three nucleotides in the order of C, C, and A to the tRNA nucleotide-73, using CTP and ATP as substrates and producing inorganic pyrophosphate. tRNA 3'-terminal CCA addition is required both for tRNA processing and repair. Also involved in tRNA surveillance by mediating tandem CCA addition to generate a CCACCA at the 3' terminus of unstable tRNAs. While stable tRNAs receive only 3'-terminal CCA, unstable tRNAs are marked with CCACCA and rapidly degraded. The polypeptide is Multifunctional CCA protein (Shigella dysenteriae serotype 1 (strain Sd197)).